The chain runs to 421 residues: Histidine--tRNA ligase (421 aa).

It belongs to the class-II aminoacyl-tRNA synthetase family. As to quaternary structure, homodimer.

Its subcellular location is the cytoplasm. The enzyme catalyses tRNA(His) + L-histidine + ATP = L-histidyl-tRNA(His) + AMP + diphosphate + H(+). The chain is Histidine--tRNA ligase from Caldicellulosiruptor bescii (strain ATCC BAA-1888 / DSM 6725 / KCTC 15123 / Z-1320) (Anaerocellum thermophilum).